The following is an 81-amino-acid chain: Costars family protein ABRACL (81 aa).

Met1 bears the N-acetylmethionine mark.

This sequence belongs to the costars family.

The polypeptide is Costars family protein ABRACL (ABRACL) (Homo sapiens (Human)).